The following is a 545-amino-acid chain: Eukaryotic translation initiation factor 3 subunit D-2 (545 aa).

The segment covering 99 to 113 (FRGNIRNNPRTRGRT) has biased composition (basic residues). Residues 99–158 (FRGNIRNNPRTRGRTGRGGAVTGIGGNQPGVGVNERTKYGKGRDNRRQMGRRFGRNAPTR) form a disordered region. Positions 114–127 (GRGGAVTGIGGNQP) are enriched in gly residues. Residues 133-145 (ERTKYGKGRDNRR) show a composition bias toward basic and acidic residues. The RNA gate stretch occupies residues 287-301 (QFDLLTVNETALEPP).

It belongs to the eIF-3 subunit D family. As to quaternary structure, component of the eukaryotic translation initiation factor 3 (eIF-3) complex. The eIF-3 complex interacts with pix.

The protein localises to the cytoplasm. Functionally, mRNA cap-binding component of the eukaryotic translation initiation factor 3 (eIF-3) complex, which is involved in protein synthesis of a specialized repertoire of mRNAs and, together with other initiation factors, stimulates binding of mRNA and methionyl-tRNAi to the 40S ribosome. The eIF-3 complex specifically targets and initiates translation of a subset of mRNAs involved in cell proliferation. In the eIF-3 complex, eif3d specifically recognizes and binds the 7-methylguanosine cap of a subset of mRNAs. The polypeptide is Eukaryotic translation initiation factor 3 subunit D-2 (Drosophila persimilis (Fruit fly)).